The following is a 270-amino-acid chain: uncharacterized protein (270 aa).

Disordered stretches follow at residues 1 to 21 and 53 to 77; these read MSTNINEEKCLEGDDIKYEKP and PNILSSKHDGDKNKNDKKKEDAKLN. Over residues 58–75 the composition is skewed to basic and acidic residues; the sequence is SKHDGDKNKNDKKKEDAK. The stretch at 182 to 270 forms a coiled coil; it reads EENKSREEKH…KIEDNLNTYE (89 aa).

This is an uncharacterized protein from Plasmodium falciparum (isolate 3D7).